Here is a 201-residue protein sequence, read N- to C-terminus: Glycerol-3-phosphate acyltransferase (201 aa).

5 helical membrane passes run 5 to 25 (LLGA…FGVV), 55 to 75 (KMGV…ILVA), 87 to 107 (FWVT…VWLG), 118 to 138 (LGIF…GYAV), and 164 to 184 (TYGP…LIFV).

The protein belongs to the PlsY family. In terms of assembly, probably interacts with PlsX.

It is found in the cell inner membrane. It carries out the reaction an acyl phosphate + sn-glycerol 3-phosphate = a 1-acyl-sn-glycero-3-phosphate + phosphate. The protein operates within lipid metabolism; phospholipid metabolism. Functionally, catalyzes the transfer of an acyl group from acyl-phosphate (acyl-PO(4)) to glycerol-3-phosphate (G3P) to form lysophosphatidic acid (LPA). This enzyme utilizes acyl-phosphate as fatty acyl donor, but not acyl-CoA or acyl-ACP. The polypeptide is Glycerol-3-phosphate acyltransferase (Anaeromyxobacter dehalogenans (strain 2CP-1 / ATCC BAA-258)).